Here is a 212-residue protein sequence, read N- to C-terminus: HTH-type transcriptional regulator RutR (212 aa).

In terms of domain architecture, HTH tetR-type spans 17–77 (SAKKKAILSA…AVLRQILDIW (61 aa)). A DNA-binding region (H-T-H motif) is located at residues 39 to 58 (TRLEQIAELAGVSKTNLLYY).

Homodimer.

Its function is as follows. Master transcription regulator which represses the degradation of pyrimidines (rutABCDEFG) and purines (gcl operon) for maintenance of metabolic balance between pyrimidines and purines. It also regulates the synthesis of pyrimidine nucleotides and arginine from glutamine (carAB) and the supply of glutamate (gadABWX). The sequence is that of HTH-type transcriptional regulator RutR (rutR) from Escherichia coli O6:H1 (strain CFT073 / ATCC 700928 / UPEC).